A 348-amino-acid polypeptide reads, in one-letter code: MSVTYREAGVDIDAGDALVERIKRLAKPTRIPEVLADVGGFAGLCALPGGLSEPVLVSGTDGVGTKLKVAFATGVHDTVGIDLVAMCVNDVLTVGARPLFFLDYFATGKLDVDVGEAVVRGIAEGCKQAGCALIGGETAELPGMYADGEYDLAGFAVGVVERSRILDGKRIAAGDAVIGVASSGLHSNGFSLARRVLEKEMGLTMSDRVADLGGTVGEALLTPTRIYARAITALLAACGDAVRGLSHITGGGLPGNLPRVLPDGLGARLDLGSYQRPAVFQVLQRGGPVEEAEMRRTFNLGVGLVAVVEKGAADRAIEAFAKSGEQAWVLGEVVSVGDVPFEERVLFG.

This sequence belongs to the AIR synthase family.

The protein resides in the cytoplasm. The catalysed reaction is 2-formamido-N(1)-(5-O-phospho-beta-D-ribosyl)acetamidine + ATP = 5-amino-1-(5-phospho-beta-D-ribosyl)imidazole + ADP + phosphate + H(+). It participates in purine metabolism; IMP biosynthesis via de novo pathway; 5-amino-1-(5-phospho-D-ribosyl)imidazole from N(2)-formyl-N(1)-(5-phospho-D-ribosyl)glycinamide: step 2/2. The sequence is that of Phosphoribosylformylglycinamidine cyclo-ligase from Sorangium cellulosum (strain So ce56) (Polyangium cellulosum (strain So ce56)).